Consider the following 196-residue polypeptide: Pyridoxal 5'-phosphate synthase subunit PdxT (196 aa).

L-glutamine is bound at residue 47 to 49 (GES). C79 serves as the catalytic Nucleophile. Residues R106 and 134-135 (IR) contribute to the L-glutamine site. Active-site charge relay system residues include H170 and E172.

The protein belongs to the glutaminase PdxT/SNO family. As to quaternary structure, in the presence of PdxS, forms a dodecamer of heterodimers. Only shows activity in the heterodimer.

The enzyme catalyses aldehydo-D-ribose 5-phosphate + D-glyceraldehyde 3-phosphate + L-glutamine = pyridoxal 5'-phosphate + L-glutamate + phosphate + 3 H2O + H(+). It carries out the reaction L-glutamine + H2O = L-glutamate + NH4(+). It functions in the pathway cofactor biosynthesis; pyridoxal 5'-phosphate biosynthesis. Catalyzes the hydrolysis of glutamine to glutamate and ammonia as part of the biosynthesis of pyridoxal 5'-phosphate. The resulting ammonia molecule is channeled to the active site of PdxS. The chain is Pyridoxal 5'-phosphate synthase subunit PdxT from Halalkalibacterium halodurans (strain ATCC BAA-125 / DSM 18197 / FERM 7344 / JCM 9153 / C-125) (Bacillus halodurans).